The sequence spans 161 residues: Phosphopantetheine adenylyltransferase (161 aa).

Serine 9 serves as a coordination point for substrate. ATP is bound by residues 9-10 (SF) and histidine 17. The substrate site is built by lysine 41, valine 73, and lysine 87. Residues 88-90 (GLR), glutamate 98, and 122-128 (YSFVSSS) contribute to the ATP site.

It belongs to the bacterial CoaD family. As to quaternary structure, homohexamer. The cofactor is Mg(2+).

It is found in the cytoplasm. The catalysed reaction is (R)-4'-phosphopantetheine + ATP + H(+) = 3'-dephospho-CoA + diphosphate. The protein operates within cofactor biosynthesis; coenzyme A biosynthesis; CoA from (R)-pantothenate: step 4/5. Functionally, reversibly transfers an adenylyl group from ATP to 4'-phosphopantetheine, yielding dephospho-CoA (dPCoA) and pyrophosphate. The protein is Phosphopantetheine adenylyltransferase of Mycobacterium bovis (strain ATCC BAA-935 / AF2122/97).